The sequence spans 545 residues: Prolyl 3-hydroxylase OGFOD1 (545 aa).

A disordered region spans residues 1-23; the sequence is MNGKRPADPGPARPMKKGKKQVS. The Fe2OG dioxygenase domain occupies 137-239; it reads PTIDMSCAKY…RLSISGWFYG (103 aa). Fe cation contacts are provided by H155 and D157. Y169 is a binding site for 2-oxoglutarate. Fe cation is bound at residue H218. Position 230 (R230) interacts with 2-oxoglutarate. Over residues 371–380 the composition is skewed to acidic residues; that stretch reads SEDDETEEKG. The interval 371-437 is disordered; the sequence is SEDDETEEKG…EAKKESSVPM (67 aa). Over residues 383–393 the composition is skewed to low complexity; the sequence is ETASAAAGTEE. Over residues 402–417 the composition is skewed to polar residues; it reads PENNQVAAGSHSQENG.

It belongs to the TPA1 family. Monomer. The cofactor is Fe(2+). It depends on L-ascorbate as a cofactor.

The protein localises to the cytoplasm. It is found in the nucleus. It carries out the reaction [ribosomal protein uS12]-L-proline + 2-oxoglutarate + O2 = [ribosomal protein uS12]-(3S)-3-hydroxy-L-proline + succinate + CO2. Its function is as follows. Prolyl 3-hydroxylase that catalyzes 3-hydroxylation of 'Pro-62' of small ribosomal subunit uS12 (RPS23), thereby regulating protein translation termination efficiency. Involved in stress granule formation. This chain is Prolyl 3-hydroxylase OGFOD1 (Ogfod1), found in Mus musculus (Mouse).